The following is a 284-amino-acid chain: 2-dehydro-3-deoxyphosphooctonate aldolase (284 aa).

The protein belongs to the KdsA family.

The protein localises to the cytoplasm. It catalyses the reaction D-arabinose 5-phosphate + phosphoenolpyruvate + H2O = 3-deoxy-alpha-D-manno-2-octulosonate-8-phosphate + phosphate. It participates in carbohydrate biosynthesis; 3-deoxy-D-manno-octulosonate biosynthesis; 3-deoxy-D-manno-octulosonate from D-ribulose 5-phosphate: step 2/3. Its pathway is bacterial outer membrane biogenesis; lipopolysaccharide biosynthesis. This is 2-dehydro-3-deoxyphosphooctonate aldolase from Pectobacterium carotovorum subsp. carotovorum (strain PC1).